Reading from the N-terminus, the 154-residue chain is Endoribonuclease YbeY (154 aa).

Residues histidine 114, histidine 118, and histidine 124 each contribute to the Zn(2+) site.

The protein belongs to the endoribonuclease YbeY family. Zn(2+) is required as a cofactor.

The protein resides in the cytoplasm. Its function is as follows. Single strand-specific metallo-endoribonuclease involved in late-stage 70S ribosome quality control and in maturation of the 3' terminus of the 16S rRNA. This chain is Endoribonuclease YbeY, found in Haemophilus influenzae (strain 86-028NP).